Reading from the N-terminus, the 479-residue chain is tRNA-dihydrouridine(20) synthase [NAD(P)+] (479 aa).

Residues 14–16 (PMV) and Q87 contribute to the FMN site. The active-site Proton donor is the C116. FMN is bound by residues K159, H187, 221-223 (NGD), and 245-246 (AR).

The protein belongs to the Dus family. Dus2 subfamily. It depends on FMN as a cofactor.

It localises to the cytoplasm. It is found in the nucleus. The catalysed reaction is 5,6-dihydrouridine(20) in tRNA + NADP(+) = uridine(20) in tRNA + NADPH + H(+). It catalyses the reaction 5,6-dihydrouridine(20) in tRNA + NAD(+) = uridine(20) in tRNA + NADH + H(+). The enzyme catalyses a 5,6-dihydrouridine in mRNA + NAD(+) = a uridine in mRNA + NADH + H(+). It carries out the reaction a 5,6-dihydrouridine in mRNA + NADP(+) = a uridine in mRNA + NADPH + H(+). In terms of biological role, catalyzes the NADPH-dependent synthesis of dihydrouridine, a modified base found in the D-loop of most tRNAs. Specifically modifies U20 in cytoplasmic tRNAs. Also able to mediate dihydrouridylation of some mRNAs, thereby affecting their translation. This is tRNA-dihydrouridine(20) synthase [NAD(P)+] from Schizosaccharomyces pombe (strain 972 / ATCC 24843) (Fission yeast).